The following is a 664-amino-acid chain: Alkaline/neutral invertase C, mitochondrial (664 aa).

3 positions are modified to phosphoserine: S41, S125, and S657.

It belongs to the glycosyl hydrolase 100 family. In terms of tissue distribution, expressed in seedlings, roots and flowers.

The protein resides in the mitochondrion. The enzyme catalyses Hydrolysis of terminal non-reducing beta-D-fructofuranoside residues in beta-D-fructofuranosides.. Mitochondrial invertase that cleaves sucrose into glucose and fructose and is involved in the regulation of aerial tissue development and floral transition. May be modulating hormone balance in relation to the radicle emergence. The polypeptide is Alkaline/neutral invertase C, mitochondrial (Arabidopsis thaliana (Mouse-ear cress)).